Reading from the N-terminus, the 294-residue chain is Ethylene-inducing xylanase 3 (294 aa).

An N-terminal signal peptide occupies residues 1–19 (MVCFSSLFVAASAIAGVFA). Positions 31 to 226 (QSTPSSQGTH…SSGSARINVA (196 aa)) constitute a GH11 domain. Glutamate 122 serves as the catalytic Nucleophile. Glutamate 213 acts as the Proton donor in catalysis. Positions 259–294 (SCAARWGQCGGSGWNGATCCSAGTCQAQNQWYSQCL) constitute a CBM1 domain.

It belongs to the glycosyl hydrolase 11 (cellulase G) family.

It catalyses the reaction Endohydrolysis of (1-&gt;4)-beta-D-xylosidic linkages in xylans.. It participates in glycan degradation; xylan degradation. Its function is as follows. Endo-1,4-beta-xylanase involved in the hydrolysis of xylan, a major structural heterogeneous polysaccharide found in plant biomass representing the second most abundant polysaccharide in the biosphere, after cellulose. Exhibits immunity-inducing activity in Nicotiana benthamiana. Can induce strong oxidative burst, activate the expression of defense-related genes, and increase resistance against oomycete and fungal pathogens in N.benthamiana. In Verticillium dahliae (strain VdLs.17 / ATCC MYA-4575 / FGSC 10137) (Verticillium wilt), this protein is Ethylene-inducing xylanase 3.